The primary structure comprises 440 residues: MQVLVETTEDLKKRATITLFSDDIEKAIKDKVVKTAKTAKMDGFRKGKVPINLIEQRYGESIQQDILIDFMQDHFSKTILQEKLNLAGRPQYLPGKYIKNENYTYSVEFEVYPEIKLKDLELIEVEKPIVSLNDDDIDKMLEKLRHQKKTWQEIPDLPAEMGDRVTFDFTGSVDGEKFEGGTASDFVMNLGEGNMIPGFEEGIVGHKMSEEFNITLTFPDEYHSESLKGKESQFLIHLKKIEKFQLPEINEEFIKNFDLPEESSIEALRAEIRKNMQRELTKAIRKRIKEQTITSLCDLNKTKVPLSLIEEEIDALRTKAASYSDKKDIIKELPRSVFAEKAESRVLVGLLLTEVIDRNKLTVDENKVQVFLEEIAEAYENPKETIEFYKNNKKLMNNIYNLALEEEAIQVLLKNAKITEKPISFSEFMKQIHETDTAND.

The PPIase FKBP-type domain occupies 162–247 (GDRVTFDFTG…LKKIEKFQLP (86 aa)).

Belongs to the FKBP-type PPIase family. Tig subfamily.

Its subcellular location is the cytoplasm. It catalyses the reaction [protein]-peptidylproline (omega=180) = [protein]-peptidylproline (omega=0). Involved in protein export. Acts as a chaperone by maintaining the newly synthesized protein in an open conformation. Functions as a peptidyl-prolyl cis-trans isomerase. This is Trigger factor from Hamiltonella defensa subsp. Acyrthosiphon pisum (strain 5AT).